The primary structure comprises 251 residues: Hydroxyacylglutathione hydrolase (251 aa).

Zn(2+) contacts are provided by His-59, His-61, Asp-63, His-64, His-118, Asp-141, and His-179.

The protein belongs to the metallo-beta-lactamase superfamily. Glyoxalase II family. Monomer. Zn(2+) is required as a cofactor.

The catalysed reaction is an S-(2-hydroxyacyl)glutathione + H2O = a 2-hydroxy carboxylate + glutathione + H(+). Its pathway is secondary metabolite metabolism; methylglyoxal degradation; (R)-lactate from methylglyoxal: step 2/2. Its function is as follows. Thiolesterase that catalyzes the hydrolysis of S-D-lactoyl-glutathione to form glutathione and D-lactic acid. This Prochlorococcus marinus (strain NATL2A) protein is Hydroxyacylglutathione hydrolase.